A 540-amino-acid polypeptide reads, in one-letter code: 2,3-bisphosphoglycerate-independent phosphoglycerate mutase (540 aa).

2 residues coordinate Mn(2+): aspartate 24 and serine 74. Residue serine 74 is the Phosphoserine intermediate of the active site. Substrate contacts are provided by residues histidine 135, 165–166 (RD), arginine 197, arginine 203, 268–271 (RPDR), and lysine 341. Aspartate 408, histidine 412, aspartate 449, histidine 450, and histidine 467 together coordinate Mn(2+).

This sequence belongs to the BPG-independent phosphoglycerate mutase family. As to quaternary structure, monomer. The cofactor is Mn(2+).

It catalyses the reaction (2R)-2-phosphoglycerate = (2R)-3-phosphoglycerate. Its pathway is carbohydrate degradation; glycolysis; pyruvate from D-glyceraldehyde 3-phosphate: step 3/5. Its function is as follows. Catalyzes the interconversion of 2-phosphoglycerate and 3-phosphoglycerate. The protein is 2,3-bisphosphoglycerate-independent phosphoglycerate mutase of Prochlorococcus marinus (strain MIT 9313).